A 395-amino-acid polypeptide reads, in one-letter code: F-box/LRR-repeat protein 12 (395 aa).

The 49-residue stretch at 13–61 (TSIIHLPDDCLSFIFQRLDSVADHDSFGLTCHRWLNIQNISRRSLQFQC) folds into the F-box domain. 10 LRR repeats span residues 75–100 (NPDVSSHHLHRLLTRFQWLEHLSLSG), 101–126 (CTVLNDSSLDSLRYPGARLHTLYLDC), 127–152 (CFGISDDGISTIASFCPNLSVVSLYR), 154–177 (NISDIGLETLARASLSLKCVNLSY), 178–203 (CPLVSDFGIKALSQACLQLESVKISN), 226–250 (SCQLEPKGITGIISGGGIEFLNISG), 252–278 (SCYIRKDGLVPIGSGIASKLRILNLRM), 279–304 (CRTVGDESIEAIAKGCPLLQEWNLAL), 305–330 (CHEVKISGWEAVGKWCRNLKKLHVNR), and 331–356 (CRNLCDQGLLALRCGCMNLQILYMNG).

This is F-box/LRR-repeat protein 12 (FBL12) from Arabidopsis thaliana (Mouse-ear cress).